We begin with the raw amino-acid sequence, 296 residues long: Carboxylesterase YbfK (296 aa).

Active-site charge relay system residues include Ser-129, Glu-244, and His-273.

This sequence belongs to the AB hydrolase superfamily.

The protein localises to the cytoplasm. The enzyme catalyses a carboxylic ester + H2O = an alcohol + a carboxylate + H(+). In terms of biological role, shows carboxylesterase activity in vitro. The protein is Carboxylesterase YbfK (ybfK) of Bacillus subtilis (strain 168).